The primary structure comprises 301 residues: Securin (301 aa).

Disordered regions lie at residues 1-55, 82-120, and 218-284; these read MLPR…RTVL, DSPT…DTPL, and ASDQ…RSIH. Residues 33-36 carry the D-box 1 motif; sequence RAPL. Polar residues predominate over residues 38 to 50; it reads STKQSNAPSSVTV. The D-box 2 signature appears at 52–55; that stretch reads RTVL. Composition is skewed to polar residues over residues 88 to 98, 110 to 119, and 231 to 245; these read EPNSQGISRSA, PRRSSLTDTP, and VSKQ…STVY. Repeats lie at residues 250-260 and 270-280; these read ASGKSIPRPLS and ASGNSRRRPLS.

Belongs to the securin family. In terms of assembly, interacts with the caspase-like cut1, and prevents its protease activity probably by covering its active site. Post-translationally, ubiquitinated by the anaphase promoting complex (APC) at the onset of anaphase, conducting to its degradation.

It is found in the cytoplasm. The protein resides in the nucleus. In terms of biological role, regulatory protein, which plays a central role in chromosome stability. Probably acts by blocking the action of key proteins. During the mitosis, it blocks separase/cut1 function, preventing the proteolysis of the cohesin complex and the subsequent segregation of the chromosomes. At the onset of anaphase, it is ubiquitinated, conducting to its destruction and to the liberation of cut1. This is Securin (cut2) from Schizosaccharomyces pombe (strain 972 / ATCC 24843) (Fission yeast).